A 119-amino-acid chain; its full sequence is Non-specific lipid-transfer protein 12 (119 aa).

Positions 1-24 (MAFTPKIITCLIVLTIYMASPTES) are cleaved as a signal peptide. 4 disulfide bridges follow: C28–C75, C38–C52, C53–C98, and C73–C112.

It belongs to the plant LTP family.

Its function is as follows. Plant non-specific lipid-transfer proteins transfer phospholipids as well as galactolipids across membranes. May play a role in wax or cutin deposition in the cell walls of expanding epidermal cells and certain secretory tissues. In Arabidopsis thaliana (Mouse-ear cress), this protein is Non-specific lipid-transfer protein 12 (LTP12).